A 561-amino-acid polypeptide reads, in one-letter code: Putative ABC transporter ATP-binding protein SAV_5847 (561 aa).

In terms of domain architecture, ABC transporter 1 spans 2–243; that stretch reads IRFEDVSVTY…SPVYPPVVDL (242 aa). 36-43 lines the ATP pocket; the sequence is GPSGVGKS. The interval 268 to 299 is disordered; sequence ERLAATETPTPTATATATAAPAPSPSRPRRPR. Over residues 272–288 the composition is skewed to low complexity; the sequence is ATETPTPTATATATAAP. The region spanning 315–543 is the ABC transporter 2 domain; that stretch reads AAVEALAVRR…SPSFAPQVTK (229 aa). 347-354 contributes to the ATP binding site; it reads GRNGAGKS.

Belongs to the ABC transporter superfamily.

It localises to the cell membrane. Its function is as follows. Probably part of an ABC transporter complex. Responsible for energy coupling to the transport system. This Streptomyces avermitilis (strain ATCC 31267 / DSM 46492 / JCM 5070 / NBRC 14893 / NCIMB 12804 / NRRL 8165 / MA-4680) protein is Putative ABC transporter ATP-binding protein SAV_5847.